Reading from the N-terminus, the 106-residue chain is COX assembly mitochondrial protein homolog (106 aa).

A2 bears the N-acetylalanine mark. The CHCH domain occupies 28 to 71 (RERCSEQVQDFTKCCKDSGVLMVVKCRKENSALKDCLTSYYKDP). Short sequence motifs (cx9C motif) lie at residues 31–41 (CSEQVQDFTKC) and 53–63 (CRKENSALKDC). 2 disulfides stabilise this stretch: C31–C63 and C41–C53.

Belongs to the CMC family. As to quaternary structure, component of the MITRAC (mitochondrial translation regulation assembly intermediate of cytochrome c oxidase complex) complex, the core components of this complex being COA3/MITRAC12 and COX14.

It localises to the mitochondrion. In terms of biological role, component of the MITRAC (mitochondrial translation regulation assembly intermediate of cytochrome c oxidase complex) complex, that regulates cytochrome c oxidase assembly. The chain is COX assembly mitochondrial protein homolog (CMC1) from Bos taurus (Bovine).